Consider the following 627-residue polypeptide: MDVIVRRCPFLARVPQAFFQQSKKSLAVYAQRCPFMMELASKPMAPSLARALCSSSSSQQKIEDTMSTGEVLKPKAEAKLPVGLATPPSNEAVAPKCPFLAAEMGQNNSNVVRQVGVEFQEDVEEIRTVQKEVSPAQLEQPSLIGKTMGEEGHQKNLMKSLLKQRPKRVSHLLQDNLPGSFTRFYYDNFFEKKIEEKKSDHTYRVFKTVNRLANEFPMADDFTGSLEDKREVSVWCSNDYLGMSRHPRVAQAIMETLRKHGSGAGGTRNISGTSKFHVELEQELADLHRKDAALLFTSCFVANDSTLFTLAKMLPGCEIYSDAGNHASMIQGIRNSGAKKFIFRHNDVAHLRELLEKGDPTKPKIVAFETVHSMDGAVCPLEEMCDLAHEFGAITFVDEVHAVGLYGPRGGGIGDRDGIMHKMDIISGTLGKAFGCVGGYIASTATLVDTVRSYAAGFIFTTSLPPMLLAGAKQSIQILKGEEGCTLRRKHQRNVKLLRQMLMDSGLPVVHCPSHIIPIRVSDAEKNTKVCDLMMSHHNIYVQAINYPTVARGDELLRIAPTPHHTPEMMKYFVDRLVQTWKEVGLELKPHSSAECTFCQQPLHFEVMNEREKSYFSGLSHLVSVCA.

The transit peptide at 1 to 58 directs the protein to the mitochondrion; that stretch reads MDVIVRRCPFLARVPQAFFQQSKKSLAVYAQRCPFMMELASKPMAPSLARALCSSSSS. Positions 204, 321, and 340 each coordinate substrate. 3 residues coordinate pyridoxal 5'-phosphate: Ser373, His401, and Thr429. Lys432 is a catalytic residue. At Lys432 the chain carries N6-(pyridoxal phosphate)lysine. Pyridoxal 5'-phosphate-binding residues include Thr461 and Thr462. Thr549 contributes to the substrate binding site.

This sequence belongs to the class-II pyridoxal-phosphate-dependent aminotransferase family. As to quaternary structure, homodimer. Pyridoxal 5'-phosphate serves as cofactor.

The protein resides in the mitochondrion inner membrane. It catalyses the reaction succinyl-CoA + glycine + H(+) = 5-aminolevulinate + CO2 + CoA. It functions in the pathway porphyrin-containing compound metabolism; protoporphyrin-IX biosynthesis; 5-aminolevulinate from glycine: step 1/1. Functionally, catalyzes the pyridoxal 5'-phosphate (PLP)-dependent condensation of succinyl-CoA and glycine to form aminolevulinic acid (ALA), with CoA and CO2 as by-products. In Opsanus tau (Oyster toadfish), this protein is 5-aminolevulinate synthase, non-specific, mitochondrial (alas1).